The chain runs to 127 residues: MORF4 family-associated protein 1 (127 aa).

The segment at 76–97 is disordered; the sequence is ESALNHLQNPDDGAEGRGTKRC. A coiled-coil region spans residues 92–126; sequence RGTKRCEKAEEKAKEIAKMAEMLVELVRRIEKSES.

It belongs to the MORF4 family-associated protein family. As to quaternary structure, found in a complex composed of MORF4L1, MRFAP1 and RB1. Interacts via its N-terminus with MORF4L1. Interacts with CSTB and MORF4L2.

It localises to the nucleus. It is found in the cytoplasm. The protein localises to the perinuclear region. The protein is MORF4 family-associated protein 1 of Bos taurus (Bovine).